We begin with the raw amino-acid sequence, 340 residues long: Glycerol-3-phosphate dehydrogenase [NAD(P)+] (340 aa).

Ser13, Trp14, and Lys108 together coordinate NADPH. Sn-glycerol 3-phosphate-binding residues include Lys108, Gly139, and Ser141. Position 143 (Ala143) interacts with NADPH. Positions 194, 247, 257, 258, and 259 each coordinate sn-glycerol 3-phosphate. Lys194 serves as the catalytic Proton acceptor. Arg258 contacts NADPH. Val282 and Glu284 together coordinate NADPH.

This sequence belongs to the NAD-dependent glycerol-3-phosphate dehydrogenase family.

Its subcellular location is the cytoplasm. The catalysed reaction is sn-glycerol 3-phosphate + NAD(+) = dihydroxyacetone phosphate + NADH + H(+). It catalyses the reaction sn-glycerol 3-phosphate + NADP(+) = dihydroxyacetone phosphate + NADPH + H(+). The protein operates within membrane lipid metabolism; glycerophospholipid metabolism. Its function is as follows. Catalyzes the reduction of the glycolytic intermediate dihydroxyacetone phosphate (DHAP) to sn-glycerol 3-phosphate (G3P), the key precursor for phospholipid synthesis. This chain is Glycerol-3-phosphate dehydrogenase [NAD(P)+], found in Streptococcus sanguinis (strain SK36).